The sequence spans 262 residues: Ribosome biogenesis GTPase A (262 aa).

Residues 12–157 (KRQIKDLLRL…ILDTPGILYK (146 aa)) enclose the CP-type G domain. Residues 54 to 57 (NKVD), 109 to 114 (NTGKST), and G153 each bind GTP.

It belongs to the TRAFAC class YlqF/YawG GTPase family. MTG1 subfamily.

The protein localises to the cytoplasm. Functionally, required for a late step of 50S ribosomal subunit assembly. Has GTPase activity. Binds to the 23S rRNA. This is Ribosome biogenesis GTPase A from Thermotoga maritima (strain ATCC 43589 / DSM 3109 / JCM 10099 / NBRC 100826 / MSB8).